Reading from the N-terminus, the 496-residue chain is MGTQKVTPALIFAITVATIGSFQFGYNTGVINAPEKIIKEFINKTLTDKGNAPPSEVLLTSLWSLSVAIFSVGGMIGSFSVGLFVNRFGRRNSMLIVNLLAVTGGCFMGLCKVAKSVEMLILGRLVIGLFCGLCTGFVPMYIGEISPTALRGAFGTLNQLGIVVGILVAQIFGLEFILGSEELWPLLLGFTILPAILQSAALPFCPESPRFLLINRKEEENAKQILQRLWGTQDVSQDIQEMKDESARMSQEKQVTVLELFRVSSYRQPIIISIVLQLSQQLSGINAVFYYSTGIFKDAGVQEPIYATIGAGVVNTIFTVVSLFLVERAGRRTLHMIGLGGMAFCSTLMTVSLLLKDNYNGMSFVCIGAILVFVAFFEIGPGPIPWFIVAELFSQGPRPAAMAVAGCSNWTSNFLVGLLFPSAAHYLGAYVFIIFTGFLITFLAFTFFKVPETRGRTFEDITRAFEGQAHGADRSGKDGVMEMNSIEPAKETTTNV.

Residues 1-10 lie on the Cytoplasmic side of the membrane; sequence MGTQKVTPAL. The chain crosses the membrane as a helical span at residues 11–32; sequence IFAITVATIGSFQFGYNTGVIN. The Extracellular portion of the chain corresponds to 33-64; the sequence is APEKIIKEFINKTLTDKGNAPPSEVLLTSLWS. N-linked (GlcNAc...) asparagine glycosylation occurs at Asn-43. The chain crosses the membrane as a helical span at residues 65–85; that stretch reads LSVAIFSVGGMIGSFSVGLFV. Over 86-90 the chain is Cytoplasmic; it reads NRFGR. The chain crosses the membrane as a helical span at residues 91–111; sequence RNSMLIVNLLAVTGGCFMGLC. The Extracellular segment spans residues 112 to 118; it reads KVAKSVE. The chain crosses the membrane as a helical span at residues 119 to 142; sequence MLILGRLVIGLFCGLCTGFVPMYI. Over 143 to 153 the chain is Cytoplasmic; that stretch reads GEISPTALRGA. The chain crosses the membrane as a helical span at residues 154-174; that stretch reads FGTLNQLGIVVGILVAQIFGL. Gln-159 provides a ligand contact to D-glucose. At 175–183 the chain is on the extracellular side; the sequence is EFILGSEEL. The chain crosses the membrane as a helical span at residues 184–204; that stretch reads WPLLLGFTILPAILQSAALPF. Topologically, residues 205–269 are cytoplasmic; sequence CPESPRFLLI…LFRVSSYRQP (65 aa). Thr-232 bears the Phosphothreonine mark. The chain crosses the membrane as a helical span at residues 270–290; that stretch reads IIISIVLQLSQQLSGINAVFY. Positions 277 to 279 are important for selectivity against fructose; sequence QLS. Residues 280 to 281 and Asn-286 contribute to the D-glucose site; that span reads QQ. The Extracellular portion of the chain corresponds to 291 to 304; it reads YSTGIFKDAGVQEP. The helical transmembrane segment at 305 to 325 threads the bilayer; it reads IYATIGAGVVNTIFTVVSLFL. Asn-315 provides a ligand contact to D-glucose. Residues 326–331 lie on the Cytoplasmic side of the membrane; that stretch reads VERAGR. The chain crosses the membrane as a helical span at residues 332–352; that stretch reads RTLHMIGLGGMAFCSTLMTVS. Over 353-363 the chain is Extracellular; sequence LLLKDNYNGMS. The chain crosses the membrane as a helical span at residues 364-389; sequence FVCIGAILVFVAFFEIGPGPIPWFIV. D-glucose is bound by residues Glu-378 and Trp-386. Residues 390-399 lie on the Cytoplasmic side of the membrane; sequence AELFSQGPRP. The chain crosses the membrane as a helical span at residues 400 to 420; it reads AAMAVAGCSNWTSNFLVGLLF. Topologically, residues 421 to 429 are extracellular; the sequence is PSAAHYLGA. The helical transmembrane segment at 430–450 threads the bilayer; the sequence is YVFIIFTGFLITFLAFTFFKV. Residues 451-496 lie on the Cytoplasmic side of the membrane; it reads PETRGRTFEDITRAFEGQAHGADRSGKDGVMEMNSIEPAKETTTNV. Ser-475 and Ser-485 each carry phosphoserine. Phosphothreonine is present on Thr-492.

Belongs to the major facilitator superfamily. Sugar transporter (TC 2.A.1.1) family. Glucose transporter subfamily. As to quaternary structure, interacts with SMIM43; the interaction may promote SLC2A3-mediated glucose transport to meet the energy needs of mesendoderm differentiation. Highly expressed in brain. Expressed in many tissues.

It is found in the cell membrane. It localises to the perikaryon. The protein resides in the cell projection. The enzyme catalyses D-glucose(out) = D-glucose(in). It carries out the reaction D-galactose(in) = D-galactose(out). Its activity is regulated as follows. Deoxyglucose transport is inhibited by D-glucose, D-galactose and maltose. Galactose transport is inhibited by D-glucose and maltose. Its function is as follows. Facilitative glucose transporter. Can also mediate the uptake of various other monosaccharides across the cell membrane. Mediates the uptake of glucose, 2-deoxyglucose, galactose, mannose, xylose and fucose, and probably also dehydroascorbate. Does not mediate fructose transport. Required for mesendoderm differentiation. The sequence is that of Solute carrier family 2, facilitated glucose transporter member 3 from Homo sapiens (Human).